Consider the following 417-residue polypeptide: NADH-quinone oxidoreductase subunit D (417 aa).

The protein belongs to the complex I 49 kDa subunit family. As to quaternary structure, NDH-1 is composed of 14 different subunits. Subunits NuoB, C, D, E, F, and G constitute the peripheral sector of the complex.

Its subcellular location is the cell inner membrane. It catalyses the reaction a quinone + NADH + 5 H(+)(in) = a quinol + NAD(+) + 4 H(+)(out). NDH-1 shuttles electrons from NADH, via FMN and iron-sulfur (Fe-S) centers, to quinones in the respiratory chain. The immediate electron acceptor for the enzyme in this species is believed to be ubiquinone. Couples the redox reaction to proton translocation (for every two electrons transferred, four hydrogen ions are translocated across the cytoplasmic membrane), and thus conserves the redox energy in a proton gradient. The polypeptide is NADH-quinone oxidoreductase subunit D (Janthinobacterium sp. (strain Marseille) (Minibacterium massiliensis)).